Reading from the N-terminus, the 1220-residue chain is Cullin-associated NEDD8-dissociated protein 1 (1220 aa).

12 HEAT repeats span residues M1–H35, E42–Q79, F121–I157, A259–V295, L365–R410, I615–D650, T680–E700, S701–L737, K738–K775, F810–K847, L850–K887, and E1020–V1057.

It belongs to the CAND family.

Its subcellular location is the nucleus. Functionally, key assembly factor of SCF (SKP1-CUL1-F-box protein) E3 ubiquitin ligase complexes that promotes the exchange of the substrate-recognition F-box subunit in SCF complexes, thereby playing a key role in the cellular repertoire of SCF complexes. Acts as a F-box protein exchange factor. In Schizosaccharomyces pombe (strain 972 / ATCC 24843) (Fission yeast), this protein is Cullin-associated NEDD8-dissociated protein 1 (knd1).